Reading from the N-terminus, the 159-residue chain is Major allergen Mal d 1 (159 aa).

Belongs to the BetVI family.

This chain is Major allergen Mal d 1, found in Malus domestica (Apple).